The primary structure comprises 227 residues: MTKNEYLIEKLQANLANHITELTSAYGEVTIECEVHNLLPVMIELRDREEFSFDQLIDLCGVDYLHYGDYDWETESATEHGFSRGVERQEAKAYAVNKPRFAVVYHLLSTKKNHRLRVKLFVEESHLIVPSVHHLWKSANWFEREAYDLYGILFDGHPDLRRLLTDYGFIGHPFRKDFPLSGEVEMRYDAKLQKVIYAPVDIVPRIVVPKVIRNDNRYIGNEGSKND.

It belongs to the complex I 30 kDa subunit family. In terms of assembly, NDH-1 is composed of 14 different subunits. Subunits NuoB, C, D, E, F, and G constitute the peripheral sector of the complex.

Its subcellular location is the cell inner membrane. It carries out the reaction a quinone + NADH + 5 H(+)(in) = a quinol + NAD(+) + 4 H(+)(out). In terms of biological role, NDH-1 shuttles electrons from NADH, via FMN and iron-sulfur (Fe-S) centers, to quinones in the respiratory chain. The immediate electron acceptor for the enzyme in this species is believed to be ubiquinone. Couples the redox reaction to proton translocation (for every two electrons transferred, four hydrogen ions are translocated across the cytoplasmic membrane), and thus conserves the redox energy in a proton gradient. This Legionella pneumophila (strain Paris) protein is NADH-quinone oxidoreductase subunit C.